The sequence spans 418 residues: tRNA-2-methylthio-N(6)-dimethylallyladenosine synthase (418 aa).

One can recognise an MTTase N-terminal domain in the interval 2–118 (PGYYLWTIGC…WREIPEGFIL (117 aa)). 6 residues coordinate [4Fe-4S] cluster: cysteine 11, cysteine 47, cysteine 81, cysteine 134, cysteine 138, and cysteine 141. Residues 120 to 351 (LRPPVSANVT…EDLQKETVGK (232 aa)) form the Radical SAM core domain. The TRAM domain occupies 346-414 (KETVGKANAA…PWSLQAKLVN (69 aa)).

The protein belongs to the methylthiotransferase family. MiaB subfamily. As to quaternary structure, monomer. [4Fe-4S] cluster serves as cofactor.

Its subcellular location is the cytoplasm. The enzyme catalyses N(6)-dimethylallyladenosine(37) in tRNA + (sulfur carrier)-SH + AH2 + 2 S-adenosyl-L-methionine = 2-methylsulfanyl-N(6)-dimethylallyladenosine(37) in tRNA + (sulfur carrier)-H + 5'-deoxyadenosine + L-methionine + A + S-adenosyl-L-homocysteine + 2 H(+). In terms of biological role, catalyzes the methylthiolation of N6-(dimethylallyl)adenosine (i(6)A), leading to the formation of 2-methylthio-N6-(dimethylallyl)adenosine (ms(2)i(6)A) at position 37 in tRNAs that read codons beginning with uridine. This Dehalococcoides mccartyi (strain ATCC BAA-2100 / JCM 16839 / KCTC 5957 / BAV1) protein is tRNA-2-methylthio-N(6)-dimethylallyladenosine synthase.